We begin with the raw amino-acid sequence, 308 residues long: UDP-N-acetylenolpyruvoylglucosamine reductase (308 aa).

One can recognise an FAD-binding PCMH-type domain in the interval 22-185 (RVGGPADWLF…TEATFRAEAG (164 aa)). Arg165 is a catalytic residue. Basic and acidic residues predominate over residues 197 to 211 (QIARRDSSQPTKERS). Positions 197 to 228 (QIARRDSSQPTKERSAGSTFRNPAGFSSTGRA) are disordered. Over residues 212–226 (AGSTFRNPAGFSSTG) the composition is skewed to polar residues. The active-site Proton donor is Ser214. Residue Glu296 is part of the active site.

This sequence belongs to the MurB family. FAD serves as cofactor.

It is found in the cytoplasm. The catalysed reaction is UDP-N-acetyl-alpha-D-muramate + NADP(+) = UDP-N-acetyl-3-O-(1-carboxyvinyl)-alpha-D-glucosamine + NADPH + H(+). It participates in cell wall biogenesis; peptidoglycan biosynthesis. In terms of biological role, cell wall formation. This chain is UDP-N-acetylenolpyruvoylglucosamine reductase, found in Cereibacter sphaeroides (strain ATCC 17029 / ATH 2.4.9) (Rhodobacter sphaeroides).